A 174-amino-acid chain; its full sequence is Crossover junction endodeoxyribonuclease RuvC (174 aa).

Residues aspartate 8, glutamate 67, and aspartate 139 contribute to the active site. Mg(2+) contacts are provided by aspartate 8, glutamate 67, and aspartate 139.

The protein belongs to the RuvC family. As to quaternary structure, homodimer which binds Holliday junction (HJ) DNA. The HJ becomes 2-fold symmetrical on binding to RuvC with unstacked arms; it has a different conformation from HJ DNA in complex with RuvA. In the full resolvosome a probable DNA-RuvA(4)-RuvB(12)-RuvC(2) complex forms which resolves the HJ. Requires Mg(2+) as cofactor.

The protein localises to the cytoplasm. The enzyme catalyses Endonucleolytic cleavage at a junction such as a reciprocal single-stranded crossover between two homologous DNA duplexes (Holliday junction).. In terms of biological role, the RuvA-RuvB-RuvC complex processes Holliday junction (HJ) DNA during genetic recombination and DNA repair. Endonuclease that resolves HJ intermediates. Cleaves cruciform DNA by making single-stranded nicks across the HJ at symmetrical positions within the homologous arms, yielding a 5'-phosphate and a 3'-hydroxyl group; requires a central core of homology in the junction. The consensus cleavage sequence is 5'-(A/T)TT(C/G)-3'. Cleavage occurs on the 3'-side of the TT dinucleotide at the point of strand exchange. HJ branch migration catalyzed by RuvA-RuvB allows RuvC to scan DNA until it finds its consensus sequence, where it cleaves and resolves the cruciform DNA. In Pseudomonas syringae pv. syringae (strain B728a), this protein is Crossover junction endodeoxyribonuclease RuvC.